We begin with the raw amino-acid sequence, 1128 residues long: Zinc finger protein 654 (1128 aa).

Residues 498–523 (GFDSLTDQSTGETDPDDVSGVQPKGH) form a disordered region. 5 consecutive C2H2-type zinc fingers follow at residues 572–594 (FACVICGRKFRNRGLMQKHLKNH), 746–771 (FKCPALGCVRIFKRIGFLNKHAMTVH), 787–809 (GKCKFCQRQFEDSQHFIDHLNRH), 815–839 (YFCLHFNCNESFKLPFQLAQHTKSH), and 844–868 (AQCSFPECHELFEDLPLLYEHEAQH). A disordered region spans residues 891–951 (DSNPNQEKDS…GNERSDDTVS (61 aa)). Polar residues-rich tracts occupy residues 903–915 (NEKQTISLPVSTS) and 937–951 (SLVQNGNERSDDTVS). Phosphoserine is present on residues S1123 and S1127.

It belongs to the krueppel C2H2-type zinc-finger protein family.

It localises to the nucleus. May be involved in transcriptional regulation. The chain is Zinc finger protein 654 from Homo sapiens (Human).